Here is a 96-residue protein sequence, read N- to C-terminus: Co-chaperonin GroES (96 aa).

Belongs to the GroES chaperonin family. In terms of assembly, heptamer of 7 subunits arranged in a ring. Interacts with the chaperonin GroEL.

It localises to the cytoplasm. Functionally, together with the chaperonin GroEL, plays an essential role in assisting protein folding. The GroEL-GroES system forms a nano-cage that allows encapsulation of the non-native substrate proteins and provides a physical environment optimized to promote and accelerate protein folding. GroES binds to the apical surface of the GroEL ring, thereby capping the opening of the GroEL channel. In Acinetobacter baumannii (strain AB307-0294), this protein is Co-chaperonin GroES.